The primary structure comprises 423 residues: Mannose-6-phosphate isomerase (423 aa).

A2 carries the N-acetylalanine modification. A phosphoserine mark is found at S102 and S108. Residues Q110, H112, E137, and H276 each contribute to the Zn(2+) site. Residue R295 is part of the active site.

Belongs to the mannose-6-phosphate isomerase type 1 family. Zn(2+) is required as a cofactor.

The protein localises to the cytoplasm. It catalyses the reaction D-mannose 6-phosphate = D-fructose 6-phosphate. The protein operates within nucleotide-sugar biosynthesis; GDP-alpha-D-mannose biosynthesis; alpha-D-mannose 1-phosphate from D-fructose 6-phosphate: step 1/2. Isomerase that catalyzes the interconversion of fructose-6-P and mannose-6-P and has a critical role in the supply of D-mannose derivatives required for many eukaryotic glycosylation reactions. The polypeptide is Mannose-6-phosphate isomerase (MPI) (Pan troglodytes (Chimpanzee)).